The following is a 169-amino-acid chain: Peptide deformylase (169 aa).

Residues cysteine 91 and histidine 133 each contribute to the Fe cation site. The active site involves glutamate 134. Residue histidine 137 coordinates Fe cation.

It belongs to the polypeptide deformylase family. Fe(2+) is required as a cofactor.

The enzyme catalyses N-terminal N-formyl-L-methionyl-[peptide] + H2O = N-terminal L-methionyl-[peptide] + formate. Its function is as follows. Removes the formyl group from the N-terminal Met of newly synthesized proteins. Requires at least a dipeptide for an efficient rate of reaction. N-terminal L-methionine is a prerequisite for activity but the enzyme has broad specificity at other positions. This is Peptide deformylase from Pectobacterium atrosepticum (strain SCRI 1043 / ATCC BAA-672) (Erwinia carotovora subsp. atroseptica).